The chain runs to 543 residues: Ipecoside beta-D-glucosidase IpeGLU1 (543 aa).

A beta-D-glucoside contacts are provided by residues Gln-36, His-140, 185–186 (NE), Tyr-350, Glu-422, Trp-471, and Phe-487. The active-site Proton donor is Glu-186. Glu-422 (nucleophile) is an active-site residue.

This sequence belongs to the glycosyl hydrolase 1 family. In terms of tissue distribution, expressed in roots.

Its subcellular location is the cytoplasm. The protein resides in the cytosol. The enzyme catalyses deacetylipecoside + H2O = deacetylipecoside aglycone + D-glucose. It carries out the reaction deacetylisoipecoside + H2O = deacetylisoipecoside aglycone + D-glucose. The catalysed reaction is 6-O-methyldeacetylipecoside + H2O = 6-O-methyldeacetylipecoside aglycone + D-glucose. It catalyses the reaction 6-O-methyldeacetylisoipecoside + H2O = 6-O-methyldeacetylisoipecoside aglycone + D-glucose. The enzyme catalyses ipecoside + H2O = ipecoside aglycone + D-glucose. It carries out the reaction 3alpha(S)-strictosidine + H2O = strictosidine aglycone + D-glucose. The protein operates within alkaloid biosynthesis. Its activity is regulated as follows. Inhibited by Cu(2+), Fe(2+) and Zn(2+). Functionally, beta-glucosidase involved in the biosynthesis of ipecac and benzylisoquinoline monoterpenoid-isoquinoline alkaloids natural products, starting by the condensation of dopamine and secologanin, and including emetine and cephaeline, drugs used both as anti-protozoal (e.g. treatment of ameobiasis) and as emetic agents. In response to pathogen and herbivore attack, triggers the release of toxic ipecoside aglycon to trigger defense responses. Catalyzes deglucosylation both on (1S)-diastereomer and (1R)-diastereomer substrates, including ipecoside, the main alkaloidal glucoside. Also active on N-deacetylisoipecoside, 6-O-methyl-N-deacetylisoipecoside, 6-O-methyl-N-deacetylipecoside and N-deacetylipecoside. The polypeptide is Ipecoside beta-D-glucosidase IpeGLU1 (Carapichea ipecacuanha (Ipecac)).